The sequence spans 219 residues: Large ribosomal subunit protein uL3 (219 aa).

This sequence belongs to the universal ribosomal protein uL3 family. In terms of assembly, part of the 50S ribosomal subunit. Forms a cluster with proteins L14 and L19.

Its function is as follows. One of the primary rRNA binding proteins, it binds directly near the 3'-end of the 23S rRNA, where it nucleates assembly of the 50S subunit. This is Large ribosomal subunit protein uL3 from Chlamydia pneumoniae (Chlamydophila pneumoniae).